The following is a 257-amino-acid chain: Zinc transporter ZupT (257 aa).

3 consecutive transmembrane segments (helical) span residues 5–25 (LILT…GVLG), 32–52 (LLAF…LMEM), and 61–81 (GMSP…YFGL). Fe(2+)-binding residues include Asn-120 and Glu-123. Zn(2+) is bound by residues Glu-123 and His-148. 4 helical membrane-spanning segments follow: residues 137-157 (LGFG…LAVA), 171-191 (ILWA…AWLI), 195-215 (MISP…MVAL), and 236-256 (GVLC…TAGI). Residues Asn-149, Glu-152, and Glu-181 each contribute to the Fe(2+) site. Glu-152 provides a ligand contact to Zn(2+).

The protein belongs to the ZIP transporter (TC 2.A.5) family. ZupT subfamily.

The protein localises to the cell inner membrane. The enzyme catalyses Zn(2+)(in) = Zn(2+)(out). In terms of biological role, mediates zinc uptake. May also transport other divalent cations. This chain is Zinc transporter ZupT, found in Escherichia coli O127:H6 (strain E2348/69 / EPEC).